Reading from the N-terminus, the 391-residue chain is MSVIKMADLDLNGKRVLIREDLNVPVKAGKVTSDARIRAALPTIKLALEKGAKVMVMSHLGRPTEGEYDEEFSLAPVVNYLNDALEQTVRLEKDYLNGVELADNEVVVFENVRFNKGEKNNDEALSKQLAALCDVYVMDAFGTAHRAQASTHGVGLFADVACAGPLLSAELEALGKALDNPARPLVAIVGGSKVSTKLTVLDSLSKIVDQLVTGGGIANTFIAAAGYPVGKSLYEADLMDEANRLCAAAVANNGEIPVPTDVVVGNEFSDSAVATLKDVSEVTSDDMIFDIGPDTANKLAKIIANAGTVVWNGPVGVFEFDQFGNGTRAIAQAIANSNAFSIAGGGDTLAAIDKYGISDKISYISTGGGAFLEFLEGKKLPAVEMLESRAK.

Residues 21–23 (DLN), arginine 36, 59–62 (HLGR), arginine 113, and arginine 146 each bind substrate. ATP contacts are provided by residues lysine 197, glutamate 319, and 345-348 (GGDT).

The protein belongs to the phosphoglycerate kinase family. Monomer.

The protein localises to the cytoplasm. The catalysed reaction is (2R)-3-phosphoglycerate + ATP = (2R)-3-phospho-glyceroyl phosphate + ADP. Its pathway is carbohydrate degradation; glycolysis; pyruvate from D-glyceraldehyde 3-phosphate: step 2/5. The chain is Phosphoglycerate kinase from Pseudoalteromonas translucida (strain TAC 125).